The sequence spans 254 residues: MKKLTKISTALLIAGLGFSFAASAKVTVFAAASMTDALQQVAKDYAKQNPKNEVVFSFASSSTLAKQVEEGAPADIFVSASNKWMKYLSEKDLTVKETEKVLVGNDLVLIAPAKSAVNSVDIAKGEWINALKDSYLSVGDPAHVPAGQYAEEALTKLNLWDKVKDRLARGKDVRGALALVERAEAPYGIVYSTDAKVSQQVKTVAVFPADSHKPVVYPVSIVKGHDNADSRDFLKYLESDAAKKVLVGYGFSAK.

Positions 1–24 are cleaved as a signal peptide; sequence MKKLTKISTALLIAGLGFSFAASA. The molybdate site is built by serine 33, serine 61, alanine 146, valine 173, and tyrosine 191.

Belongs to the bacterial solute-binding protein ModA family. As to quaternary structure, the complex is composed of two ATP-binding proteins (ModC), two transmembrane proteins (ModB) and a solute-binding protein (ModA).

Its subcellular location is the periplasm. Its function is as follows. Involved in the transport of molybdenum into the cell. The polypeptide is Molybdate-binding protein ModA (modA) (Haemophilus influenzae (strain ATCC 51907 / DSM 11121 / KW20 / Rd)).